Here is a 196-residue protein sequence, read N- to C-terminus: Imidazoleglycerol-phosphate dehydratase (196 aa).

Belongs to the imidazoleglycerol-phosphate dehydratase family.

It is found in the cytoplasm. The enzyme catalyses D-erythro-1-(imidazol-4-yl)glycerol 3-phosphate = 3-(imidazol-4-yl)-2-oxopropyl phosphate + H2O. It functions in the pathway amino-acid biosynthesis; L-histidine biosynthesis; L-histidine from 5-phospho-alpha-D-ribose 1-diphosphate: step 6/9. The chain is Imidazoleglycerol-phosphate dehydratase from Chlorobium chlorochromatii (strain CaD3).